The following is a 257-amino-acid chain: UPF0246 protein Rsph17025_0016 (257 aa).

The protein belongs to the UPF0246 family.

In Cereibacter sphaeroides (strain ATCC 17025 / ATH 2.4.3) (Rhodobacter sphaeroides), this protein is UPF0246 protein Rsph17025_0016.